We begin with the raw amino-acid sequence, 953 residues long: Ribonuclease E (953 aa).

2 disordered regions span residues 1–23 and 118–314; these read MIDG…PDRL and VAPQ…RRRP. Positions 14–23 are enriched in basic and acidic residues; that stretch reads SQHEELPDRL. The span at 127–150 shows a compositional bias: acidic residues; it reads LADDEDVDDGPDYVADDSDADDEG. The segment covering 157 to 169 has biased composition (basic residues); the sequence is NRRRRRGRRGRGR. Residues 183 to 193 show a composition bias toward polar residues; sequence DQQSEPRAQQF. Positions 199–223 are enriched in acidic residues; it reads AETDDGDDRDSEDTEAGDNGEDENG. A compositionally biased stretch (basic residues) spans 230–240; the sequence is RRRRRRRRRKS. Basic and acidic residues-rich tracts occupy residues 263-272 and 294-311; these read VHERVPRAGD and TRLE…DAGR. Residues 376–453 enclose the S1 motif domain; the sequence is GNIYLGIVQN…GHKGARLTTQ (78 aa). Mg(2+) is bound by residues aspartate 647 and aspartate 691. Zn(2+) is bound by residues cysteine 749 and cysteine 752. 2 disordered regions span residues 766 to 808 and 822 to 953; these read SAAA…APGE and LAGR…IRLD. The segment covering 848–915 has biased composition (acidic residues); the sequence is DLDDTAQADF…DADVDEEDAA (68 aa).

Belongs to the RNase E/G family. Assembles into a homotetramer formed by a dimer of dimers. Interacts with DNA-binding protein HU (hupB). Requires Mg(2+) as cofactor. It depends on Zn(2+) as a cofactor.

Its subcellular location is the cytoplasm. The enzyme catalyses Endonucleolytic cleavage of single-stranded RNA in A- and U-rich regions.. In terms of biological role, endoribonuclease that plays a central role in RNA processing and decay. Plays a major role in pre-16S rRNA maturation, probably generating the mature 5'-end, and a minor role in pre-5S and pre-23S rRNA maturation. Probably also processes tRNA. RNase E and HupB jointly contribute to cellular adaptation to changing growth conditions and survival during antibiotic treatment and in the host. The sequence is that of Ribonuclease E from Mycobacterium tuberculosis (strain ATCC 25618 / H37Rv).